A 397-amino-acid chain; its full sequence is Acetate kinase (397 aa).

Position 8 (Asn8) interacts with Mg(2+). Residue Lys15 coordinates ATP. Arg89 is a binding site for substrate. Asp146 acts as the Proton donor/acceptor in catalysis. Residues 206-210, 281-283, and 329-333 each bind ATP; these read HLGNG, DLR, and GVGEN. Position 382 (Glu382) interacts with Mg(2+).

This sequence belongs to the acetokinase family. In terms of assembly, homodimer. Mg(2+) is required as a cofactor. Mn(2+) serves as cofactor.

Its subcellular location is the cytoplasm. The catalysed reaction is acetate + ATP = acetyl phosphate + ADP. Its pathway is metabolic intermediate biosynthesis; acetyl-CoA biosynthesis; acetyl-CoA from acetate: step 1/2. In terms of biological role, catalyzes the formation of acetyl phosphate from acetate and ATP. Can also catalyze the reverse reaction. This Bacillus anthracis protein is Acetate kinase.